The following is a 469-amino-acid chain: MSAPRTLYDKIWDDHVVDQQEDGTCLLYIDRHLVHEVTSPQAFEGLRMAGRKVRHPEKTLAVVDHNVPTSPDRINGIKNEESRIQVEALAKNAADFNVEYYSERDRRQGVVHIVGPEQGFTLPGMTIVCGDSHTSTHGAFGSLAHGIGTSEVEHVLATQTLIQKKAKNMLVRVEGELAPGVTAKDITLAIIGEIGTAGGTGYVIEYAGSAIRSLSMEGRMTVCNMSIEGGARAGLIAPDETTFAYVQDKPRAPKGEALEQAISYWKTLHSDEGAHFDKIVELDAAKISPVVSWGSSPEDVVFVTDIVPNPDEIKDETKRASKWRALDYMGLKPGTKMTDIKIDRVFIGSCTNGRIEDLRDAARMAAGKKVAAGVNAMIVPGSGLVKEQAEAEGLDKIFIEAGFDWREPGCSMCLAMNDDRLKPGERCASTSNRNFEGRQGFKGRTHLVSPAMAAAAAIAGHFVDIREWN.

3 residues coordinate [4Fe-4S] cluster: Cys-350, Cys-410, and Cys-413.

It belongs to the aconitase/IPM isomerase family. LeuC type 1 subfamily. In terms of assembly, heterodimer of LeuC and LeuD. Requires [4Fe-4S] cluster as cofactor.

The enzyme catalyses (2R,3S)-3-isopropylmalate = (2S)-2-isopropylmalate. It functions in the pathway amino-acid biosynthesis; L-leucine biosynthesis; L-leucine from 3-methyl-2-oxobutanoate: step 2/4. Functionally, catalyzes the isomerization between 2-isopropylmalate and 3-isopropylmalate, via the formation of 2-isopropylmaleate. This chain is 3-isopropylmalate dehydratase large subunit, found in Brucella anthropi (strain ATCC 49188 / DSM 6882 / CCUG 24695 / JCM 21032 / LMG 3331 / NBRC 15819 / NCTC 12168 / Alc 37) (Ochrobactrum anthropi).